A 247-amino-acid chain; its full sequence is Uridylate kinase (247 aa).

15-18 (KLSG) serves as a coordination point for ATP. Residues 23 to 28 (GDEGFG) form an involved in allosteric activation by GTP region. G57 lines the UMP pocket. G58 and R62 together coordinate ATP. UMP-binding positions include D77 and 138–145 (TGNPFFTT). Residues T165, Y171, and D174 each coordinate ATP.

This sequence belongs to the UMP kinase family. In terms of assembly, homohexamer.

The protein localises to the cytoplasm. It catalyses the reaction UMP + ATP = UDP + ADP. The protein operates within pyrimidine metabolism; CTP biosynthesis via de novo pathway; UDP from UMP (UMPK route): step 1/1. With respect to regulation, allosterically activated by GTP. Inhibited by UTP. In terms of biological role, catalyzes the reversible phosphorylation of UMP to UDP. The polypeptide is Uridylate kinase (Saccharophagus degradans (strain 2-40 / ATCC 43961 / DSM 17024)).